The primary structure comprises 209 residues: Uracil phosphoribosyltransferase (209 aa).

5-phospho-alpha-D-ribose 1-diphosphate is bound by residues arginine 79, arginine 104, and 131–139 (DPMLATGGS). Residues isoleucine 194 and 199-201 (GDA) each bind uracil. Residue aspartate 200 coordinates 5-phospho-alpha-D-ribose 1-diphosphate.

The protein belongs to the UPRTase family. It depends on Mg(2+) as a cofactor.

It catalyses the reaction UMP + diphosphate = 5-phospho-alpha-D-ribose 1-diphosphate + uracil. Its pathway is pyrimidine metabolism; UMP biosynthesis via salvage pathway; UMP from uracil: step 1/1. Allosterically activated by GTP. Catalyzes the conversion of uracil and 5-phospho-alpha-D-ribose 1-diphosphate (PRPP) to UMP and diphosphate. In Streptococcus pneumoniae (strain ATCC BAA-255 / R6), this protein is Uracil phosphoribosyltransferase.